A 512-amino-acid polypeptide reads, in one-letter code: Serine--tRNA ligase, cytoplasmic (512 aa).

An N-acetylmethionine modification is found at methionine 1. Residues 9–61 form an interaction with tRNA region; the sequence is RVDKGGDPALIRETQEKRFKDPGLVDQLVKADSEWRRCRFRADNLNKLKNLCS. Serine 241 carries the phosphoserine modification. L-serine is bound by residues threonine 271 and arginine 302. Residues 302–304 and 318–321 contribute to the ATP site; these read RQE and VHQF. Lysine 323 carries the N6-acetyllysine modification. Residue glutamate 325 participates in L-serine binding. Residue 391–394 participates in ATP binding; sequence ELVS. Residue asparagine 427 participates in L-serine binding. A disordered region spans residues 470–512; the sequence is FVKPAPIDQEPSKKQKKQHEGSKKKAKEVPLENQLQSMEVTEA. A compositionally biased stretch (basic and acidic residues) spans 479-499; that stretch reads EPSKKQKKQHEGSKKKAKEVP. The Nuclear localization signal signature appears at 482–494; it reads KKQKKQHEGSKKK. Positions 502-512 are enriched in polar residues; sequence NQLQSMEVTEA. Position 506 is a phosphoserine (serine 506).

Belongs to the class-II aminoacyl-tRNA synthetase family. Type-1 seryl-tRNA synthetase subfamily. In terms of assembly, homodimer. The tRNA molecule may bind across the dimer. Interacts with SIRT2. Interacts with METTL6; interaction is required for the tRNA N(3)-methylcytidine methyltransferase activity of METTL6.

It is found in the cytoplasm. The protein localises to the nucleus. The catalysed reaction is tRNA(Ser) + L-serine + ATP = L-seryl-tRNA(Ser) + AMP + diphosphate + H(+). The enzyme catalyses tRNA(Sec) + L-serine + ATP = L-seryl-tRNA(Sec) + AMP + diphosphate + H(+). Its pathway is aminoacyl-tRNA biosynthesis; selenocysteinyl-tRNA(Sec) biosynthesis; L-seryl-tRNA(Sec) from L-serine and tRNA(Sec): step 1/1. Functionally, catalyzes the attachment of serine to tRNA(Ser) in a two-step reaction: serine is first activated by ATP to form Ser-AMP and then transferred to the acceptor end of tRNA(Ser). Is probably also able to aminoacylate tRNA(Sec) with serine, to form the misacylated tRNA L-seryl-tRNA(Sec), which will be further converted into selenocysteinyl-tRNA(Sec). In the nucleus, binds to the VEGFA core promoter and prevents MYC binding and transcriptional activation by MYC. Recruits SIRT2 to the VEGFA promoter, promoting deacetylation of histone H4 at 'Lys-16' (H4K16). Thereby, inhibits the production of VEGFA and sprouting angiogenesis mediated by VEGFA. The polypeptide is Serine--tRNA ligase, cytoplasmic (Sars1) (Mus musculus (Mouse)).